The chain runs to 86 residues: Protein K3 homolog (86 aa).

The S1 motif domain occupies 15-86 (NINDITQGII…LKGYIDVSIV (72 aa)).

This sequence belongs to the poxviridae K3 protein family. In terms of assembly, interacts with host PKR kinase.

In terms of biological role, viral mimic of eIF-2-alpha that acts as a pseudosubstrate for EIF2AK2/PKR kinase. Inhibits therefore eIF-2-alpha phosphorylation by host EIF2AK2/PKR kinase and prevents protein synthesis shutoff. The chain is Protein K3 homolog from Sus scrofa (Pig).